The primary structure comprises 259 residues: Transmembrane protein 81 (259 aa).

The N-terminal stretch at 1–18 (MALSTLWLVLMLWTSLFS) is a signal peptide. At 19–221 (DSQCSTLSQA…KVYSSSTIRN (203 aa)) the chain is on the extracellular side. The Ig-like domain maps to 97 to 172 (GRRLVLDCLE…VLDTGKRRVK (76 aa)). Cys-104 and Cys-161 are oxidised to a cystine. The helical transmembrane segment at 222-242 (IVIISVPLSFAIAVVIFIFLF) threads the bilayer. At 243–259 (CYSRRARRAAHLCQDNI) the chain is on the cytoplasmic side.

Forms a complex with izumo1 and spaca6 on spermatocyte cell membrane. The complex binds to oocyte protein bncr. Expressed in sperm.

The protein resides in the cell membrane. Its function is as follows. Essential fertilization factor required for male fertility. Part of a conserved trimeric sperm complex with the essential fertilization factors IZUMO1 and SPACA6 which bridges sperm and oocyte membranes during fertilization by binding to IZUMO1R/JUNO on the oocyte. The sequence is that of Transmembrane protein 81 from Danio rerio (Zebrafish).